The sequence spans 354 residues: Holliday junction branch migration complex subunit RuvB (354 aa).

The disordered stretch occupies residues 1–22; the sequence is MTIQTDDFAPAPPRVVSAAPAS. The tract at residues 5–193 is large ATPase domain (RuvB-L); sequence TDDFAPAPPR…FGIVARLEFY (189 aa). ATP-binding positions include L32, R33, G74, K77, T78, T79, 140–142, R183, Y193, and R230; that span reads EDY. T78 is a binding site for Mg(2+). Residues 194–264 are small ATPAse domain (RuvB-S); it reads TPEELALIVR…IAHKALVMLD (71 aa). Residues 267–354 form a head domain (RuvB-H) region; that stretch reads PQGFDLMDRK…RSDGQDLFGI (88 aa). DNA is bound by residues R303, R322, and R327.

Belongs to the RuvB family. In terms of assembly, homohexamer. Forms an RuvA(8)-RuvB(12)-Holliday junction (HJ) complex. HJ DNA is sandwiched between 2 RuvA tetramers; dsDNA enters through RuvA and exits via RuvB. An RuvB hexamer assembles on each DNA strand where it exits the tetramer. Each RuvB hexamer is contacted by two RuvA subunits (via domain III) on 2 adjacent RuvB subunits; this complex drives branch migration. In the full resolvosome a probable DNA-RuvA(4)-RuvB(12)-RuvC(2) complex forms which resolves the HJ.

It localises to the cytoplasm. The catalysed reaction is ATP + H2O = ADP + phosphate + H(+). Functionally, the RuvA-RuvB-RuvC complex processes Holliday junction (HJ) DNA during genetic recombination and DNA repair, while the RuvA-RuvB complex plays an important role in the rescue of blocked DNA replication forks via replication fork reversal (RFR). RuvA specifically binds to HJ cruciform DNA, conferring on it an open structure. The RuvB hexamer acts as an ATP-dependent pump, pulling dsDNA into and through the RuvAB complex. RuvB forms 2 homohexamers on either side of HJ DNA bound by 1 or 2 RuvA tetramers; 4 subunits per hexamer contact DNA at a time. Coordinated motions by a converter formed by DNA-disengaged RuvB subunits stimulates ATP hydrolysis and nucleotide exchange. Immobilization of the converter enables RuvB to convert the ATP-contained energy into a lever motion, pulling 2 nucleotides of DNA out of the RuvA tetramer per ATP hydrolyzed, thus driving DNA branch migration. The RuvB motors rotate together with the DNA substrate, which together with the progressing nucleotide cycle form the mechanistic basis for DNA recombination by continuous HJ branch migration. Branch migration allows RuvC to scan DNA until it finds its consensus sequence, where it cleaves and resolves cruciform DNA. The polypeptide is Holliday junction branch migration complex subunit RuvB (Variovorax paradoxus (strain S110)).